The sequence spans 294 residues: Nucleotide-binding protein CLB_3433 (294 aa).

8–15 (GLSGAGKT) provides a ligand contact to ATP. 59 to 62 (DIRG) serves as a coordination point for GTP.

The protein belongs to the RapZ-like family.

Functionally, displays ATPase and GTPase activities. This is Nucleotide-binding protein CLB_3433 from Clostridium botulinum (strain ATCC 19397 / Type A).